Reading from the N-terminus, the 77-residue chain is Secapin (77 aa).

The signal sequence occupies residues 1 to 32 (MKNYSKNATHLITVLLFSFVVILLIIPSKCEA). A propeptide spanning residues 33–52 (VSNDMQPLEARSADLIPEPR) is cleaved from the precursor. An intrachain disulfide couples Cys61 to Cys72.

Belongs to the secapin family. As to expression, expressed by the venom gland.

It localises to the secreted. Its function is as follows. Nontoxic peptide. The protein is Secapin of Vespa velutina nigrithorax (Hornet).